The chain runs to 112 residues: uncharacterized protein (112 aa).

A helical membrane pass occupies residues 62–82 (THSFIFFILFLFIFIFLTFSH).

It is found in the membrane. This is an uncharacterized protein from Saccharomyces cerevisiae (strain ATCC 204508 / S288c) (Baker's yeast).